The chain runs to 316 residues: ATP synthase gamma chain (316 aa).

Belongs to the ATPase gamma chain family. F-type ATPases have 2 components, CF(1) - the catalytic core - and CF(0) - the membrane proton channel. CF(1) has five subunits: alpha(3), beta(3), gamma(1), delta(1), epsilon(1). CF(0) has three main subunits: a, b and c.

Its subcellular location is the cellular thylakoid membrane. Functionally, produces ATP from ADP in the presence of a proton gradient across the membrane. The gamma chain is believed to be important in regulating ATPase activity and the flow of protons through the CF(0) complex. The chain is ATP synthase gamma chain from Prochlorococcus marinus (strain MIT 9312).